Reading from the N-terminus, the 112-residue chain is MALAKAKETVASAPVVVYSKSYCPFCVRVKKLFEQLGATFKAIELDGESDGSELQSALAEWTGQRTVPNVFINGKHIGGCDDTLALNNEGKLVPLLTEAGAIASSAKTTITA.

The 101-residue stretch at 3-103 (LAKAKETVAS…PLLTEAGAIA (101 aa)) folds into the Glutaredoxin domain. Residues C23 and C26 are joined by a disulfide bond.

It belongs to the glutaredoxin family. CPYC subfamily. The N-terminus is blocked. As to expression, expressed in aleurone layer.

Its subcellular location is the cytoplasm. Its function is as follows. Has a glutathione-disulfide oxidoreductase activity in the presence of NADPH and glutathione reductase. Reduces low molecular weight disulfides and proteins. Possesses thioltransferase, dehydroascorbate reductase and GSH-dependent peroxidase activities in vitro. The chain is Glutaredoxin-C6 (GRXC6) from Oryza sativa subsp. japonica (Rice).